A 451-amino-acid polypeptide reads, in one-letter code: Tubulin gamma-1 chain (451 aa).

Position 131 is a phosphoserine; by BRSK1 (S131). 142–148 (AGGTGSG) contacts GTP.

Belongs to the tubulin family. As to quaternary structure, component of the gamma-tubulin ring complex (gTuRC) consisting of TUBGCP2, TUBGCP3, TUBGCP4, TUBGCP5 and TUBGCP6 and gamma-tubulin TUBG1 or TUBG2. TUBGCP2, TUBGCP3, TUBGCP4, TUBGCP5 and TUBGCP6 assemble in a 5:5:2:1:1 stoichiometry; each is associated with a gamma-tubulin, thereby arranging 14 gamma-tubulins in a helical manner. Gamma-tubulin at the first position is blocked by TUBGCP3 at the last position, allowing 13 protafilaments to grow into a microtubule. The gTuRC (via TUBGCP3 and TUBGCP6) interacts with ACTB and MZT1; the interactions form a luminal bridge that stabilizes the initial structure during complex assembly. The gTuRC (via TUBGCP2) interacts with MZT2A/MZT2B and CDK5RAP2 (via CM1 motif); the interactions play a role in gTuRC activation. Interacts with alpha-beta tubulin heterodimers; the interaction allows microtubules to nucleate from the gTuRC. Interacts with B9D2. Interacts with CDK5RAP2; the interaction is leading to centrosomal localization of TUBG1 and CDK5RAP2. Interacts with CIMAP3. Interacts with SAS6 and NUP62 at the centrosome. Interacts with EML3 (phosphorylated at 'Thr-881') and HAUS8. Interacts with DNM2; this interaction may participate in centrosome cohesion. Interacts with CCDC66. Phosphorylation at Ser-131 by BRSK1 regulates centrosome duplication, possibly by mediating relocation of gamma-tubulin and its associated proteins from the cytoplasm to the centrosome.

The protein localises to the cytoplasm. The protein resides in the cytoskeleton. It is found in the microtubule organizing center. It localises to the centrosome. Its subcellular location is the spindle. In terms of biological role, tubulin is the major constituent of microtubules, protein filaments consisting of alpha- and beta-tubulin heterodimers. Gamma-tubulin is a key component of the gamma-tubulin ring complex (gTuRC) which mediates microtubule nucleation. The gTuRC regulates the minus-end nucleation of alpha-beta tubulin heterodimers that grow into microtubule protafilaments, a critical step in centrosome duplication and spindle formation. This chain is Tubulin gamma-1 chain, found in Canis lupus familiaris (Dog).